The following is a 732-amino-acid chain: uncharacterized protein (732 aa).

Transmembrane regions (helical) follow at residues 687 to 707 and 712 to 732; these read YLFPVVGVAALLLIGNMGSDL and GVKVATALSAMLLAIFAYYTS.

This sequence belongs to the FadG family.

It is found in the cell membrane. This is an uncharacterized protein from Bacillus subtilis (strain 168).